The primary structure comprises 356 residues: Tyrosine recombinase XerS (356 aa).

In terms of domain architecture, Core-binding (CB) spans 16 to 121; it reads LMPWYVLEYY…ALSSLYKYLT (106 aa). In terms of domain architecture, Tyr recombinase spans 169–354; sequence GFLTYIDQEH…VNDEQKNALD (186 aa). Active-site residues include Arg-210, Lys-234, His-306, Arg-309, and His-332. Residue Tyr-341 is the O-(3'-phospho-DNA)-tyrosine intermediate of the active site.

The protein belongs to the 'phage' integrase family. XerS subfamily.

The protein resides in the cytoplasm. Its activity is regulated as follows. FtsK is required for recombination. Functionally, site-specific tyrosine recombinase, which acts by catalyzing the cutting and rejoining of the recombining DNA molecules. Essential to convert dimers of the bacterial chromosome into monomers to permit their segregation at cell division. This chain is Tyrosine recombinase XerS, found in Streptococcus pneumoniae serotype 19F (strain G54).